The chain runs to 370 residues: 3-dehydroquinate synthase (370 aa).

NAD(+)-binding positions include 108–112 (GVVGD), 132–133 (TT), K145, and K154. Positions 187, 250, and 268 each coordinate Zn(2+).

It belongs to the sugar phosphate cyclases superfamily. Dehydroquinate synthase family. The cofactor is Co(2+). Zn(2+) serves as cofactor. It depends on NAD(+) as a cofactor.

Its subcellular location is the cytoplasm. The catalysed reaction is 7-phospho-2-dehydro-3-deoxy-D-arabino-heptonate = 3-dehydroquinate + phosphate. The protein operates within metabolic intermediate biosynthesis; chorismate biosynthesis; chorismate from D-erythrose 4-phosphate and phosphoenolpyruvate: step 2/7. Its function is as follows. Catalyzes the conversion of 3-deoxy-D-arabino-heptulosonate 7-phosphate (DAHP) to dehydroquinate (DHQ). The chain is 3-dehydroquinate synthase from Caulobacter vibrioides (strain NA1000 / CB15N) (Caulobacter crescentus).